The primary structure comprises 49 residues: Large ribosomal subunit protein bL33B (49 aa).

It belongs to the bacterial ribosomal protein bL33 family.

The sequence is that of Large ribosomal subunit protein bL33B from Oceanobacillus iheyensis (strain DSM 14371 / CIP 107618 / JCM 11309 / KCTC 3954 / HTE831).